Consider the following 826-residue polypeptide: Arf-GAP with ANK repeat and PH domain-containing protein cnt-1 (826 aa).

The region spanning aspartate 275–leucine 373 is the PH domain. Residues threonine 447–alanine 572 enclose the Arf-GAP domain. The C4-type zinc-finger motif lies at cysteine 462–cysteine 485. Residues threonine 570–tyrosine 604 are disordered. A compositionally biased stretch (low complexity) spans serine 588–serine 603. ANK repeat units follow at residues asparagine 690–methionine 719, lysine 723–leucine 752, and aspartate 756–phenylalanine 789.

In terms of assembly, interacts (via C-terminal ankyrin repeat) with rab-10 (GTP-bound form); the interaction is required for cnt-1 recruitment to endosomes. Interacts (via C-terminal ankyrin repeat) with rab-8 (GTP-bound form) and rab-35 (GTP-bound form). Cleaved by caspase ced-3 after Asp-382 and Asp-609. Cleavage at Asp-382 is required for subsequent cleavage at Asp-609.

It localises to the cytoplasm. The protein localises to the recycling endosome membrane. The protein resides in the basolateral cell membrane. It is found in the apical cell membrane. Its subcellular location is the cell membrane. Its function is as follows. GTPase-activating protein for the ADP ribosylation factor family. Regulates endosome recycling downstream of rab-10 and upstream of arf-6. Promotes apoptosis during embryonic development. Produced by caspase ced-3-mediated cleavage, and translocates to the plasma membrane where it prevents the activation of the prosurvival Akt-1/2 and sgk-1 signaling pathway by competing with Akt-1/2 for the binding to PtdIns(3,4,5)P3. The sequence is that of Arf-GAP with ANK repeat and PH domain-containing protein cnt-1 from Caenorhabditis elegans.